We begin with the raw amino-acid sequence, 282 residues long: tRNA pseudouridine synthase A (282 aa).

Asp-51 functions as the Nucleophile in the catalytic mechanism. Tyr-109 is a substrate binding site.

The protein belongs to the tRNA pseudouridine synthase TruA family. In terms of assembly, homodimer.

The enzyme catalyses uridine(38/39/40) in tRNA = pseudouridine(38/39/40) in tRNA. Its function is as follows. Formation of pseudouridine at positions 38, 39 and 40 in the anticodon stem and loop of transfer RNAs. In Delftia acidovorans (strain DSM 14801 / SPH-1), this protein is tRNA pseudouridine synthase A.